The primary structure comprises 108 residues: Phosphoribosyl-AMP cyclohydrolase (108 aa).

Asp-73 lines the Mg(2+) pocket. Position 74 (Cys-74) interacts with Zn(2+). Residues Asp-75 and Asp-77 each coordinate Mg(2+). The Zn(2+) site is built by Cys-90 and Cys-97.

Belongs to the PRA-CH family. As to quaternary structure, homodimer. Requires Mg(2+) as cofactor. Zn(2+) serves as cofactor.

The protein resides in the cytoplasm. It carries out the reaction 1-(5-phospho-beta-D-ribosyl)-5'-AMP + H2O = 1-(5-phospho-beta-D-ribosyl)-5-[(5-phospho-beta-D-ribosylamino)methylideneamino]imidazole-4-carboxamide. It functions in the pathway amino-acid biosynthesis; L-histidine biosynthesis; L-histidine from 5-phospho-alpha-D-ribose 1-diphosphate: step 3/9. Catalyzes the hydrolysis of the adenine ring of phosphoribosyl-AMP. The sequence is that of Phosphoribosyl-AMP cyclohydrolase from Lactiplantibacillus plantarum (strain ATCC BAA-793 / NCIMB 8826 / WCFS1) (Lactobacillus plantarum).